We begin with the raw amino-acid sequence, 154 residues long: Myoglobin (154 aa).

A Globin domain is found at 2 to 148 (GLSDGEWQLV…FRNDMAAKYK (147 aa)). Position 4 is a phosphoserine (S4). H65 serves as a coordination point for nitrite. Position 65 (H65) interacts with O2. T68 bears the Phosphothreonine mark. H94 contacts heme b.

This sequence belongs to the globin family. Monomeric.

It localises to the cytoplasm. The protein localises to the sarcoplasm. It catalyses the reaction Fe(III)-heme b-[protein] + nitric oxide + H2O = Fe(II)-heme b-[protein] + nitrite + 2 H(+). It carries out the reaction H2O2 + AH2 = A + 2 H2O. Its function is as follows. Monomeric heme protein which primary function is to store oxygen and facilitate its diffusion within muscle tissues. Reversibly binds oxygen through a pentacoordinated heme iron and enables its timely and efficient release as needed during periods of heightened demand. Depending on the oxidative conditions of tissues and cells, and in addition to its ability to bind oxygen, it also has a nitrite reductase activity whereby it regulates the production of bioactive nitric oxide. Under stress conditions, like hypoxia and anoxia, it also protects cells against reactive oxygen species thanks to its pseudoperoxidase activity. The sequence is that of Myoglobin (MB) from Ochotona princeps (Southern American pika).